Consider the following 425-residue polypeptide: Histone-binding protein RBBP7 (425 aa).

Position 2 is an N-acetylalanine (A2). At S3 the chain carries Phosphoserine. K4 is modified (N6-acetyllysine; alternate). K4 is covalently cross-linked (Glycyl lysine isopeptide (Lys-Gly) (interchain with G-Cter in SUMO2); alternate). A Glycyl lysine isopeptide (Lys-Gly) (interchain with G-Cter in ubiquitin); alternate cross-link involves residue K4. Phosphothreonine is present on T10. WD repeat units lie at residues 47 to 122 (QWLP…KINH), 128 to 173 (RARY…LRLR), 181 to 217 (GLSW…KIVD), 228 to 269 (VVED…HLVD), 275 to 312 (VNCL…LHTF), 318 to 369 (EIFQ…LFIH), and 376 to 403 (ISDF…IWQM). The residue at position 95 (S95) is a Phosphoserine. Residue K101 forms a Glycyl lysine isopeptide (Lys-Gly) (interchain with G-Cter in SUMO2) linkage. K119 is modified (N6-acetyllysine). A Glycyl lysine isopeptide (Lys-Gly) (interchain with G-Cter in SUMO2) cross-link involves residue K155. N6-acetyllysine; alternate is present on K159. K159 participates in a covalent cross-link: Glycyl lysine isopeptide (Lys-Gly) (interchain with G-Cter in SUMO2); alternate. Phosphoserine is present on S354.

Belongs to the WD repeat RBAP46/RBAP48/MSI1 family. In terms of assembly, binds directly to helix 1 of the histone fold of histone H4, a region that is not accessible when H4 is in chromatin. Subunit of the type B histone acetyltransferase (HAT) complex, composed of RBBP7 and HAT1. Subunit of the core histone deacetylase (HDAC) complex, which is composed of HDAC1, HDAC2, RBBP4 and RBBP7. The core HDAC complex associates with SIN3A, ARID4B/SAP180, SAP18, SAP30, SAP130, SUDS3/SAP45 and possibly ARID4A/RBP1 and ING1 to form the SIN3 HDAC complex. Component of the nucleosome remodeling and deacetylase (NuRD) repressor complex, composed of core proteins MTA1, MTA2, MTA3, RBBP4, RBBP7, HDAC1, HDAC2, MBD2, MBD3, and peripherally associated proteins CDK2AP1, CDK2AP2, GATAD2A, GATAD2B, CHD3, CHD4 and CHD5. The exact stoichiometry of the NuRD complex is unknown, and some subunits such as MBD2 and MBD3, GATAD2A and GATAD2B, and CHD3, CHD4 and CHD5 define mutually exclusive NuRD complexes. The NuRD complex may interact with MBD3L1. The NuRD complex may interact with MBD3L2. Subunit of the PRC2/EED-EZH2 complex, which is composed of at least EED, EZH2, RBBP4, RBBP7 and SUZ12. The PRC2/EED-EZH2 complex may also associate with HDAC1. Component of the NURF-1 ISWI chromatin remodeling complex (also called the nucleosome-remodeling factor (NURF) complex) at least composed of SMARCA1, BPTF, RBBP4 and RBBP7. Within the complex interacts with SMARCA1. Component of the BPFT-SMARCA1 complex at least composed of SMARCA1, BPFT, RBBP4 and RBBP7; the complex is catalytically inactive and does not remodel chromatin. Within the complex interacts with SMARCA1. Interacts with BRCA1. Interacts with CDK2AP1. Interacts with CENPA. Interacts with CHD3. Interacts with CHD4. Interacts with CREBBP, and this interaction may be enhanced by the binding of phosphorylated CREB1 to CREBBP. Interacts with HDAC7. Interacts with MTA1. Interacts with PWWP2B. Interacts with RB1 (via viral protein-binding domain). Interacts with SUV39H1. Higher levels in brain, thymus, lung, spleen, kidney, testis, and ovary/uterus; lower levels in heart, liver, and muscle.

Its subcellular location is the nucleus. Functionally, core histone-binding subunit that may target chromatin remodeling factors, histone acetyltransferases and histone deacetylases to their histone substrates in a manner that is regulated by nucleosomal DNA. Component of several complexes which regulate chromatin metabolism. These include the type B histone acetyltransferase (HAT) complex, which is required for chromatin assembly following DNA replication; the core histone deacetylase (HDAC) complex, which promotes histone deacetylation and consequent transcriptional repression; the nucleosome remodeling and histone deacetylase complex (the NuRD complex), which promotes transcriptional repression by histone deacetylation and nucleosome remodeling; and the PRC2/EED-EZH2 complex, which promotes repression of homeotic genes during development; and the NURF (nucleosome remodeling factor) complex. The protein is Histone-binding protein RBBP7 (Rbbp7) of Mus musculus (Mouse).